A 735-amino-acid polypeptide reads, in one-letter code: Mitochondrial potassium channel ATP-binding subunit (735 aa).

A mitochondrion-targeting transit peptide spans 1–25; the sequence is MLVHLFRVGIRGGPFPGRLLPPLRF. At 26 to 144 the chain is on the mitochondrial matrix side; that stretch reads QTFSAVRNTW…KLFWQFLHPH (119 aa). The chain crosses the membrane as a helical span at residues 145 to 165; sequence LLVLGVAVVLALGAALVNVQI. In terms of domain architecture, ABC transmembrane type-1 spans 150–437; that stretch reads VAVVLALGAA…LSVLFGQVVR (288 aa). At 166–195 the chain is on the mitochondrial intermembrane side; the sequence is PLLLGQLVEVVAKYTRDHVGSFMTESQNLS. Residues 196 to 216 form a helical membrane-spanning segment; the sequence is THLLILYGVQGLLTFGYLVLL. Residues 217 to 295 are Mitochondrial matrix-facing; it reads SHVGERMAVD…SLSMLSTRLT (79 aa). The helical transmembrane segment at 296–316 threads the bilayer; it reads LLLMVATPALMGVGTLMGSGL. At 317 to 735 the chain is on the mitochondrial intermembrane side; it reads RKLSRQCQEQ…EGPRSHQHKS (419 aa). Residues 472–709 enclose the ABC transporter domain; it reads VTFQNVCFSY…GGLYAELIRR (238 aa). 507 to 514 is an ATP binding site; the sequence is GQSGGGKT. Residues 712–735 form a disordered region; it reads LDAPRTAAPPPKKPEGPRSHQHKS.

This sequence belongs to the ABC transporter superfamily. ABCB family. Multidrug resistance exporter (TC 3.A.1.201) subfamily. As to quaternary structure, the mitochondrial potassium channel (mitoK(ATP)) is composed of 4 subunits of CCDC51/MITOK and 4 subunits of ABCB8/MITOSUR. Interacts with C10orf88/PAAT. Interacts with NRP1; NRP1 regulates ABCB8/MITOSUR protein levels in mitochondria. As to expression, ubiquitous.

The protein localises to the mitochondrion inner membrane. Channel activity inhibited by ATP via ABCB8/MITOSUR subunit. Its function is as follows. ATP-binding subunit of the mitochondrial ATP-gated potassium channel (mitoK(ATP)). Together with pore-forming subunit CCDC51/MITOK of the mitoK(ATP) channel, mediates ATP-dependent potassium currents across the mitochondrial inner membrane. An increase in ATP intracellular levels closes the channel, inhibiting K(+) transport, whereas a decrease in ATP levels enhances K(+) uptake in the mitochondrial matrix. Plays a role in mitochondrial iron transport. Required for maintenance of normal cardiac function, possibly by influencing mitochondrial iron export and regulating the maturation of cytosolic iron sulfur cluster-containing enzymes. The chain is Mitochondrial potassium channel ATP-binding subunit from Homo sapiens (Human).